The following is a 205-amino-acid chain: Phosphoserine phosphatase ThrH (205 aa).

Catalysis depends on Asp-7, which acts as the Nucleophile. Asp-7 and Glu-9 together coordinate Mg(2+). Glu-9 (proton donor) is an active-site residue. Substrate contacts are provided by residues Glu-15, Arg-46, 90-91 (SD), and Lys-133. Asp-152 is a binding site for Mg(2+). Asn-155 contacts substrate.

This sequence belongs to the thrH family. Mg(2+) serves as cofactor.

It catalyses the reaction O-phospho-L-serine + H2O = L-serine + phosphate. The catalysed reaction is O-phospho-D-serine + H2O = D-serine + phosphate. It participates in amino-acid biosynthesis; L-serine biosynthesis; L-serine from 3-phospho-D-glycerate: step 3/3. Phosphoserine phosphatase that mediates dephosphorylation of phosphoserine in the serine biosynthesis pathway. Also able to dephosphorylate other substrates such as phospho-L(or D)-threonine, with lower activity. Shows phosphoserine:homoserine phosphotransferase activity by transferring the phosphoryl group to homoserine using phosphoserine as the phosphoryl group donor. The protein is Phosphoserine phosphatase ThrH (thrH) of Pseudomonas aeruginosa (strain ATCC 15692 / DSM 22644 / CIP 104116 / JCM 14847 / LMG 12228 / 1C / PRS 101 / PAO1).